A 297-amino-acid chain; its full sequence is Vacuolar protein sorting-associated protein 26C (297 aa).

This sequence belongs to the VPS26 family. In terms of assembly, component of the commander complex that is essential for endosomal recycling of transmembrane cargos; the commander complex is composed of the CCC subcomplex and the retriever subcomplex. Component of the heterotrimeric retriever complex consisting of VPS26C, VPS29 and VPS35L; within the complex interacts with VPS35L. Interacts with SNX17 (via C-terminus); the interaction is direct and associates SNX17 with the retriever complex. Interacts with SNX31; the interaction is direct.

The protein resides in the endosome. Functionally, component of the commander complex that is essential for endosomal recycling of transmembrane cargos; the commander complex is composed of the CCC subcomplex and the retriever subcomplex. Component of the retriever complex, which is a heterotrimeric complex related to retromer cargo-selective complex (CSC) and essential for retromer-independent retrieval and recycling of numerous cargos such as integrin alpha-5/beta-1 (ITGA5:ITGB1). The recruitment of the retriever complex to the endosomal membrane involves CCC and WASH complexes. In the endosomes, drives the retriever and recycling of NxxY-motif-containing cargo proteins by coupling to SNX17, a cargo essential for the homeostatic maintenance of numerous cell surface proteins associated with processes that include cell migration, cell adhesion, nutrient supply and cell signaling. This chain is Vacuolar protein sorting-associated protein 26C (VPS26C), found in Pongo abelii (Sumatran orangutan).